A 1037-amino-acid chain; its full sequence is Glycine dehydrogenase (decarboxylating) 1, mitochondrial (1037 aa).

A mitochondrion-targeting transit peptide spans 1–67 (MERARRLAYR…AFGRHQQTRS (67 aa)). An S-glutathionyl cysteine; transient modification is found at Cys-98. An S-glutathionyl cysteine mark is found at Cys-402 and Cys-463. Lys-774 bears the N6-(pyridoxal phosphate)lysine mark. An S-glutathionyl cysteine; transient mark is found at Cys-777, Cys-943, and Cys-1022.

This sequence belongs to the GcvP family. As to quaternary structure, homodimer. The glycine cleavage system is composed of four proteins: P, T, L and H. Pyridoxal 5'-phosphate serves as cofactor. In terms of processing, glutathionylated at Cys-98, Cys-777, Cys-943 and Cys-1022 after S-nitrosoglutathione treatment. Post-translationally, S-nitrosylated at unknown positions by nitric oxide. In terms of tissue distribution, expressed in leaves. Detected in roots, stems, flowers and siliques.

It localises to the mitochondrion. The catalysed reaction is N(6)-[(R)-lipoyl]-L-lysyl-[glycine-cleavage complex H protein] + glycine + H(+) = N(6)-[(R)-S(8)-aminomethyldihydrolipoyl]-L-lysyl-[glycine-cleavage complex H protein] + CO2. Inhibited by harpin, S-nitrosoglutathione (GSNO), nitric oxide, N-ethylmaleimide and 5,5'-dithiobis-(2-nitrobenzoic acid). The glycine decarboxylase (GDC) or glycine cleavage system catalyzes the degradation of glycine. The P protein binds the alpha-amino group of glycine through its pyridoxal phosphate cofactor; CO(2) is released and the remaining methylamine moiety is then transferred to the lipoamide cofactor of the H protein. In Arabidopsis thaliana (Mouse-ear cress), this protein is Glycine dehydrogenase (decarboxylating) 1, mitochondrial (GLDP1).